The following is a 67-amino-acid chain: DNA gyrase inhibitor YacG (67 aa).

Zn(2+)-binding residues include Cys-9, Cys-12, Cys-28, and Cys-32. Positions 48-67 are disordered; sequence PVSPDAEDELFSEELPPRAH.

It belongs to the DNA gyrase inhibitor YacG family. As to quaternary structure, interacts with GyrB. Requires Zn(2+) as cofactor.

In terms of biological role, inhibits all the catalytic activities of DNA gyrase by preventing its interaction with DNA. Acts by binding directly to the C-terminal domain of GyrB, which probably disrupts DNA binding by the gyrase. The sequence is that of DNA gyrase inhibitor YacG from Pseudomonas fluorescens (strain ATCC BAA-477 / NRRL B-23932 / Pf-5).